Here is a 440-residue protein sequence, read N- to C-terminus: Adenylosuccinate synthetase (440 aa).

Residues 13–19 and 41–43 contribute to the GTP site; these read GDEGKGK and GHT. D14 (proton acceptor) is an active-site residue. Residues D14 and G41 each contribute to the Mg(2+) site. IMP contacts are provided by residues 14 to 17, 39 to 42, T135, R149, Q230, T245, and R313; these read DEGK and NAGH. Residue H42 is the Proton donor of the active site. Position 309-315 (309-315) interacts with substrate; sequence TVTKRKR. Residues R315, 341-343, and 423-425 each bind GTP; these read KLD and STG.

This sequence belongs to the adenylosuccinate synthetase family. In terms of assembly, homodimer. Mg(2+) is required as a cofactor.

Its subcellular location is the cytoplasm. The catalysed reaction is IMP + L-aspartate + GTP = N(6)-(1,2-dicarboxyethyl)-AMP + GDP + phosphate + 2 H(+). The protein operates within purine metabolism; AMP biosynthesis via de novo pathway; AMP from IMP: step 1/2. Plays an important role in the de novo pathway of purine nucleotide biosynthesis. Catalyzes the first committed step in the biosynthesis of AMP from IMP. The sequence is that of Adenylosuccinate synthetase from Methylobacillus flagellatus (strain ATCC 51484 / DSM 6875 / VKM B-1610 / KT).